A 553-amino-acid polypeptide reads, in one-letter code: T-complex protein 1 subunit eta (553 aa).

Glycine 41 provides a ligand contact to ADP. An ATP-binding site is contributed by glycine 41. Mg(2+) is bound at residue aspartate 92. Residues glycine 93, threonine 94, threonine 95, serine 96, serine 164, and serine 165 each coordinate ADP. Glycine 93 lines the ATP pocket. ATP is bound at residue serine 96. The ATP site is built by arginine 398 and glycine 409. Residues glycine 409, glutamate 494, and arginine 499 each contribute to the ADP site. Arginine 499 provides a ligand contact to ATP. The segment at 523-553 (PRSTVDAPPGGRGRGRGQTPQPLRPRSVALS) is disordered. Over residues 539–553 (GQTPQPLRPRSVALS) the composition is skewed to low complexity.

Component of the chaperonin-containing T-complex (TRiC), a hexadecamer composed of two identical back-to-back stacked rings enclosing a protein folding chamber. Each ring is made up of eight different subunits: TCP1/CCT1, CCT2, CCT3, CCT4, CCT5, CCT6A/CCT6, CCT7, CCT8.

The protein localises to the cytoplasm. It catalyses the reaction ATP + H2O = ADP + phosphate + H(+). Functionally, component of the chaperonin-containing T-complex (TRiC), a molecular chaperone complex that assists the folding of actin, tubulin and other proteins upon ATP hydrolysis. In Gallus gallus (Chicken), this protein is T-complex protein 1 subunit eta.